The primary structure comprises 576 residues: 2-isopropylmalate synthase (576 aa).

One can recognise a Pyruvate carboxyltransferase domain in the interval 31-305 (PIWMSTDLRD…DPGLDFSHVN (275 aa)). Mg(2+) is bound by residues Asp-40, His-244, His-246, and Asn-280. The tract at residues 437–576 (ADGPIGYVSH…RGMAPSMELA (140 aa)) is regulatory domain.

It belongs to the alpha-IPM synthase/homocitrate synthase family. LeuA type 2 subfamily. Homodimer. Mg(2+) is required as a cofactor.

It localises to the cytoplasm. The enzyme catalyses 3-methyl-2-oxobutanoate + acetyl-CoA + H2O = (2S)-2-isopropylmalate + CoA + H(+). The protein operates within amino-acid biosynthesis; L-leucine biosynthesis; L-leucine from 3-methyl-2-oxobutanoate: step 1/4. Functionally, catalyzes the condensation of the acetyl group of acetyl-CoA with 3-methyl-2-oxobutanoate (2-ketoisovalerate) to form 3-carboxy-3-hydroxy-4-methylpentanoate (2-isopropylmalate). This Ralstonia nicotianae (strain ATCC BAA-1114 / GMI1000) (Ralstonia solanacearum) protein is 2-isopropylmalate synthase.